A 333-amino-acid chain; its full sequence is Protein amalgam (333 aa).

The first 23 residues, 1-23 (MARLRLLIGLIFCLAISLDSVLS), serve as a signal peptide directing secretion. In terms of domain architecture, Ig-like V-type spans 25 to 128 (PVISQISKDV…VLVSATEKVT (104 aa)). N-linked (GlcNAc...) asparagine glycans are attached at residues asparagine 45 and asparagine 86. 3 disulfides stabilise this stretch: cysteine 46/cysteine 117, cysteine 161/cysteine 208, and cysteine 251/cysteine 307. Ig-like C2-type domains are found at residues 139–223 (PVIA…RLIR) and 230–323 (PQIA…LHLF). Asparagine 308 is a glycosylation site (N-linked (GlcNAc...) asparagine).

It is found in the cell membrane. The chain is Protein amalgam (Ama) from Drosophila melanogaster (Fruit fly).